Consider the following 226-residue polypeptide: MLSMFMCNNIVDYVDDIDNGIVQDIEDEASNNVDRDYVYPLPENMVYRFDKSTNILDYLSTERDHVMMAVRYYMSKQRLDDLYRQLPTKTRSYIDIINIYCDKVSNDYNRDMNIMYDMASTKSFTVYDINNEVNTILMDNKGLGVRLATISFITELGRRCMNPVKTIKMFTLLSHTICDDCFVDYITDISPPDNTIPNTSTREYLKLIGITAIMFATYKTLKYMIG.

The protein belongs to the orthopoxvirus OPG045 family. Homodimer. Interacts with host pro-apoptotic protein BCL2L11 (via BH3 domain). Interacts with host NLRP1. Interacts with host BAK.

Its subcellular location is the host mitochondrion outer membrane. It localises to the host cytoplasm. Its function is as follows. Plays a role in evading host innate immune response by inhibiting host inflammasome activation. Interacts with and inhibits NLR-mediated interleukin-1 beta/IL1B production in infected cells. At the host mitochondria outer membrane, interacts with the BH3 domain of host BAK and prevents BAK from binding active BAX. In turn, host apoptosis is inhibited. The sequence is that of Apoptosis regulator OPG045 (OPG045) from Homo sapiens (Human).